The sequence spans 185 residues: Thymidine kinase (185 aa).

17-24 (GPMFAGKT) is a binding site for ATP. E92 serves as the catalytic Proton acceptor. Substrate is bound at residue F121. Residues C146 and C149 each coordinate Zn(2+). A substrate-binding site is contributed by 166–170 (LILAG). 2 residues coordinate Zn(2+): C179 and C182.

This sequence belongs to the thymidine kinase family.

The catalysed reaction is thymidine + ATP = dTMP + ADP + H(+). Its function is as follows. Phosphorylates thymidine. ASFV replicates in the cytoplasm of infected cells and contains genes encoding a number of enzymes needed for DNA synthesis, including thymidine kinase. Important for growth in swine macrophages in vitro and is a virus virulence factor in swine. The polypeptide is Thymidine kinase (African swine fever virus (isolate Pig/Kenya/KEN-50/1950) (ASFV)).